The following is a 394-amino-acid chain: Tryptophan synthase beta chain (394 aa).

Lys-90 is modified (N6-(pyridoxal phosphate)lysine).

It belongs to the TrpB family. As to quaternary structure, tetramer of two alpha and two beta chains. Requires pyridoxal 5'-phosphate as cofactor.

It catalyses the reaction (1S,2R)-1-C-(indol-3-yl)glycerol 3-phosphate + L-serine = D-glyceraldehyde 3-phosphate + L-tryptophan + H2O. Its pathway is amino-acid biosynthesis; L-tryptophan biosynthesis; L-tryptophan from chorismate: step 5/5. The beta subunit is responsible for the synthesis of L-tryptophan from indole and L-serine. The protein is Tryptophan synthase beta chain of Bacteroides thetaiotaomicron (strain ATCC 29148 / DSM 2079 / JCM 5827 / CCUG 10774 / NCTC 10582 / VPI-5482 / E50).